Consider the following 378-residue polypeptide: TelA-like protein SAV1406 (378 aa).

It belongs to the TelA family.

The chain is TelA-like protein SAV1406 from Staphylococcus aureus (strain Mu50 / ATCC 700699).